A 678-amino-acid polypeptide reads, in one-letter code: uncharacterized protein (678 aa).

The next 2 membrane-spanning stretches (helical) occupy residues 14 to 34 (LMFA…WTGL) and 180 to 200 (GAVI…IGGF).

Belongs to the mycobacterial PPE family.

The protein resides in the cell membrane. This is an uncharacterized protein from Mycobacterium tuberculosis (strain ATCC 25618 / H37Rv).